The following is a 212-amino-acid chain: Abscisic acid receptor PYL10 (212 aa).

The segment at 34–191 is START-like; the sequence is YAVGPGQCSS…NLQKLKSVSE (158 aa). Abscisate-binding positions include lysine 70, 107-112, 134-140, and glutamate 156; these read ASTSTE and RLRNYRS. Positions 103 to 107 match the Gate loop motif; that stretch reads SGLPA. Positions 133-135 match the Latch loop motif; that stretch reads HRL.

It belongs to the PYR/PYL/RCAR abscisic acid intracellular receptor family. Homodimer. Interacts with PP2C53. Binding to PP2C53 is dependent on the presence of abscisic acid (ABA). Interacts with PP2C50. Binding to PP2C50 is dependent on the presence of ABA.

It localises to the cytoplasm. The protein resides in the cytosol. It is found in the nucleus. Inhibits the protein phosphatases PP2C06 and PP2C09 when activated by abscisic acid (ABA). Together with PP2C53, SAPK8 and SAPK10, may form an ABA signaling module involved in stress response. This is Abscisic acid receptor PYL10 from Oryza sativa subsp. japonica (Rice).